A 204-amino-acid chain; its full sequence is N-(5'-phosphoribosyl)anthranilate isomerase (204 aa).

It belongs to the TrpF family.

The enzyme catalyses N-(5-phospho-beta-D-ribosyl)anthranilate = 1-(2-carboxyphenylamino)-1-deoxy-D-ribulose 5-phosphate. The protein operates within amino-acid biosynthesis; L-tryptophan biosynthesis; L-tryptophan from chorismate: step 3/5. The sequence is that of N-(5'-phosphoribosyl)anthranilate isomerase from Bacillus anthracis (strain A0248).